The sequence spans 520 residues: Macrophage receptor MARCO (520 aa).

The Cytoplasmic portion of the chain corresponds to 1–43; that stretch reads MRNKKILKEDELLSETQQAAFHQIAMEPFEINVPKPKRRNGVN. Residues 44–64 traverse the membrane as a helical; Signal-anchor for type II membrane protein segment; that stretch reads FSLAVVVIYLILLTAGAGLLV. Residues 65 to 520 lie on the Extracellular side of the membrane; the sequence is VQVLNLQARL…EEDAGVECSV (456 aa). 2 N-linked (GlcNAc...) asparagine glycosylation sites follow: N83 and N136. Residues 142-423 are disordered; the sequence is GMFRIKGEQG…KGERGENSVS (282 aa). The 273-residue stretch at 147-419 folds into the Collagen-like domain; it reads KGEQGAPGLQ…VKGEKGERGE (273 aa). 3 stretches are compositionally biased toward low complexity: residues 203-227, 290-345, and 380-398; these read EAGL…PQGE, LAGF…PGAT, and SPGL…QKGD. Basic and acidic residues predominate over residues 410–419; that stretch reads VKGEKGERGE. Residues 424–519 form the SRCR domain; sequence VRIVGSSNRG…HEEDAGVECS (96 aa). Intrachain disulfides connect C447–C508, C460–C518, and C488–C498.

Homotrimer; disulfide-linked. Trimers may assemble in larger oligomers thus resulting in the creation of a large surface capable of interacting with very large ligands. In terms of processing, N-glycosylated. Expressed in alveolar macrophages (at protein level). Detected in macrophages from various tissues including thymus, kidney, Kupffer cells of liver, and spleen.

It localises to the cell membrane. Its function is as follows. Pattern recognition receptor (PRR) which binds Gram-positive and Gram-negative bacteria. Also plays a role in binding of unopsonized particles by alveolar macrophages. Binds to the secretoglobin SCGB3A2. This Homo sapiens (Human) protein is Macrophage receptor MARCO (MARCO).